Consider the following 120-residue polypeptide: uncharacterized protein (120 aa).

The next 2 membrane-spanning stretches (helical) occupy residues 8–28 (PFVT…CTLV) and 55–75 (FLEN…IGIL).

It is found in the membrane. This is an uncharacterized protein from Saccharomyces cerevisiae (strain ATCC 204508 / S288c) (Baker's yeast).